We begin with the raw amino-acid sequence, 331 residues long: Probable allantoicase (331 aa).

It belongs to the allantoicase family.

It carries out the reaction allantoate + H2O = (S)-ureidoglycolate + urea. It functions in the pathway nitrogen metabolism; (S)-allantoin degradation; (S)-ureidoglycolate from allantoate (aminidohydrolase route): step 1/1. This Stutzerimonas stutzeri (strain A1501) (Pseudomonas stutzeri) protein is Probable allantoicase.